A 152-amino-acid chain; its full sequence is UPF0225 protein YchJ (152 aa).

Belongs to the UPF0225 family.

This Escherichia coli O81 (strain ED1a) protein is UPF0225 protein YchJ.